We begin with the raw amino-acid sequence, 413 residues long: Probable glucan 1,3-beta-glucosidase ARB_04467 (413 aa).

A signal peptide spans 1–17; it reads MKFGSLLGLSLVGLSVA. Residues E46, E202, and Y262 each coordinate substrate. The active-site Proton donor is the E202. An intrachain disulfide couples C282 to C412. E300 (nucleophile) is an active-site residue.

The protein belongs to the glycosyl hydrolase 5 (cellulase A) family. As to quaternary structure, monomer.

The protein localises to the secreted. It localises to the cell wall. The catalysed reaction is Successive hydrolysis of beta-D-glucose units from the non-reducing ends of (1-&gt;3)-beta-D-glucans, releasing alpha-glucose.. In terms of biological role, major glucan 1,3-beta-glucosidase required for cell wall integrity. Beta-glucanases participate in the metabolism of beta-glucan, the main structural component of the cell wall. Can also function biosynthetically as a transglycosylase. Functions to deliver glucan from the cell to the extracellular matrix. Involved in cell-substrate and cell-cell adhesion. The polypeptide is Probable glucan 1,3-beta-glucosidase ARB_04467 (Arthroderma benhamiae (strain ATCC MYA-4681 / CBS 112371) (Trichophyton mentagrophytes)).